Here is a 265-residue protein sequence, read N- to C-terminus: Polyphosphate glucokinase (265 aa).

Polar residues predominate over residues 1–18; it reads MTSTGPETSETPGATTQR. The interval 1–22 is disordered; it reads MTSTGPETSETPGATTQRHGFG. 24-29 provides a ligand contact to ATP; that stretch reads DVGGSG.

Belongs to the ROK (NagC/XylR) family. In terms of assembly, homodimer.

The enzyme catalyses [phosphate](n) + D-glucose = [phosphate](n-1) + D-glucose 6-phosphate + H(+). It catalyses the reaction D-glucose + ATP = D-glucose 6-phosphate + ADP + H(+). Functionally, catalyzes the phosphorylation of glucose using polyphosphate or ATP as the phosphoryl donor. Polyphosphate, rather than ATP, seems to be the major phosphate donor for the enzyme in M.tuberculosis. This Mycobacterium tuberculosis (strain CDC 1551 / Oshkosh) protein is Polyphosphate glucokinase (ppgK).